The primary structure comprises 509 residues: Type II methyltransferase M.BsoBI (509 aa).

Belongs to the N(4)/N(6)-methyltransferase family. N(4) subfamily.

It catalyses the reaction a 2'-deoxycytidine in DNA + S-adenosyl-L-methionine = an N(4)-methyl-2'-deoxycytidine in DNA + S-adenosyl-L-homocysteine + H(+). Functionally, an alpha subtype methylase that recognizes the double-stranded sequence 5'-CYCGRG-3', methylates C-1 on both strands, and protects the DNA from cleavage by the BsoBI endonuclease. The sequence is that of Type II methyltransferase M.BsoBI from Geobacillus stearothermophilus (Bacillus stearothermophilus).